Here is a 244-residue protein sequence, read N- to C-terminus: Protein crossbronx (244 aa).

The 157-residue stretch at 20–176 (QQEYKILAEY…VQKNIKESKE (157 aa)) folds into the UBC core domain. The segment at 209–244 (AGRSKQTEPSAQQANGGHATGLSWVKEGEFKPLSIE) is disordered.

This sequence belongs to the ubiquitin-conjugating enzyme family. FTS subfamily.

This chain is Protein crossbronx (cbx), found in Drosophila erecta (Fruit fly).